Here is a 413-residue protein sequence, read N- to C-terminus: Acyltransferase mokF (413 aa).

Position 93 (arginine 93) interacts with monacolin J. Serine 96 acts as the Acyl-ester intermediate in catalysis. Monacolin J is bound by residues arginine 193, tyrosine 208, and tyrosine 278. Residue glycine 386 coordinates 2-methylbutanoate.

This sequence belongs to the class-A beta-lactamase family.

It catalyses the reaction monacolin J carboxylate + (S)-2-methylbutanoyl-[2-methylbutanoate polyketide synthase] = lovastatin carboxylate + holo-[2-methylbutanoate polyketide synthase]. Its pathway is polyketide biosynthesis; lovastatin biosynthesis. Functionally, acyltransferase; part of the gene cluster that mediates the biosynthesis of monakolin K, also known as lovastatin, and which acts as a potent competitive inhibitor of HMG-CoA reductase. Monakolin K biosynthesis is performed in two stages. The first stage is catalyzed by the nonaketide synthase mokA, which belongs to type I polyketide synthases and catalyzes the iterative nine-step formation of the polyketide. This PKS stage is completed by the action of dehydrogenase mokE, which catalyzes the NADPH-dependent reduction of the unsaturated tetra-, penta- and heptaketide intermediates that arise during the mokA-mediated biosynthesis of the nonaketide chain and leads to dihydromonacolin L. Covalently bound dihydromonacolin L is released from mokA by the mokD esterase. Conversion of dihydromonacolin L into monacolin L and then monacolin J is subsequently performed with the participation of molecular oxygen and P450 monoogygenase mokC. Finally, mokF performs the conversion of monacoline J to monacoline K through the addition of the side-chain diketide moiety (2R)-2-methylbutanoate produced by the diketide synthase mokB. The polypeptide is Acyltransferase mokF (Monascus pilosus (Red mold)).